The primary structure comprises 310 residues: Methionyl-tRNA formyltransferase (310 aa).

109–112 contributes to the (6S)-5,6,7,8-tetrahydrofolate binding site; it reads SLLP.

Belongs to the Fmt family.

It carries out the reaction L-methionyl-tRNA(fMet) + (6R)-10-formyltetrahydrofolate = N-formyl-L-methionyl-tRNA(fMet) + (6S)-5,6,7,8-tetrahydrofolate + H(+). Functionally, attaches a formyl group to the free amino group of methionyl-tRNA(fMet). The formyl group appears to play a dual role in the initiator identity of N-formylmethionyl-tRNA by promoting its recognition by IF2 and preventing the misappropriation of this tRNA by the elongation apparatus. In Staphylococcus epidermidis (strain ATCC 35984 / DSM 28319 / BCRC 17069 / CCUG 31568 / BM 3577 / RP62A), this protein is Methionyl-tRNA formyltransferase.